A 941-amino-acid chain; its full sequence is Endoglucanase (941 aa).

An N-terminal signal peptide occupies residues Met1–Ala29. SLH domains follow at residues Asn37–Ala94, Ser95–Pro158, and Gln161–Tyr224. Residue Glu373 is the Proton donor of the active site. Glu485 (nucleophile) is an active-site residue.

It belongs to the glycosyl hydrolase 5 (cellulase A) family.

It carries out the reaction Endohydrolysis of (1-&gt;4)-beta-D-glucosidic linkages in cellulose, lichenin and cereal beta-D-glucans.. This chain is Endoglucanase, found in Bacillus sp. (strain KSM-635).